We begin with the raw amino-acid sequence, 151 residues long: MNQIILDLQIACVDNQGLPNENDFQLWLSSAISPFKKNAEVTIRLVDEIESRQLNFQYRQIDKPTNVLSFPFISPVQVPLPLLGDLIICRQIVEKEAVLQKKALWAHWAHMVVHGALHLLGYDHILNDDAKKMESIETEIMMYLGYPNPYD.

Zn(2+) is bound by residues H114, H118, and H124.

The protein belongs to the endoribonuclease YbeY family. It depends on Zn(2+) as a cofactor.

The protein localises to the cytoplasm. Single strand-specific metallo-endoribonuclease involved in late-stage 70S ribosome quality control and in maturation of the 3' terminus of the 16S rRNA. The polypeptide is Endoribonuclease YbeY (Hamiltonella defensa subsp. Acyrthosiphon pisum (strain 5AT)).